A 72-amino-acid polypeptide reads, in one-letter code: Translation initiation factor IF-1 (72 aa).

In terms of domain architecture, S1-like spans 1–72; sequence MAKQDVIELE…SRGRITYRYK (72 aa).

It belongs to the IF-1 family. As to quaternary structure, component of the 30S ribosomal translation pre-initiation complex which assembles on the 30S ribosome in the order IF-2 and IF-3, IF-1 and N-formylmethionyl-tRNA(fMet); mRNA recruitment can occur at any time during PIC assembly.

Its subcellular location is the cytoplasm. In terms of biological role, one of the essential components for the initiation of protein synthesis. Stabilizes the binding of IF-2 and IF-3 on the 30S subunit to which N-formylmethionyl-tRNA(fMet) subsequently binds. Helps modulate mRNA selection, yielding the 30S pre-initiation complex (PIC). Upon addition of the 50S ribosomal subunit IF-1, IF-2 and IF-3 are released leaving the mature 70S translation initiation complex. This chain is Translation initiation factor IF-1, found in Staphylococcus epidermidis (strain ATCC 35984 / DSM 28319 / BCRC 17069 / CCUG 31568 / BM 3577 / RP62A).